A 126-amino-acid chain; its full sequence is Large ribosomal subunit protein bL12 (126 aa).

Basic and acidic residues predominate over residues 104 to 116 (AKKEDAEKAKAQL). The interval 104–126 (AKKEDAEKAKAQLEEAGATVELK) is disordered. Low complexity predominate over residues 117-126 (EEAGATVELK).

Belongs to the bacterial ribosomal protein bL12 family. In terms of assembly, homodimer. Part of the ribosomal stalk of the 50S ribosomal subunit. Forms a multimeric L10(L12)X complex, where L10 forms an elongated spine to which 2 to 4 L12 dimers bind in a sequential fashion. Binds GTP-bound translation factors.

Its function is as follows. Forms part of the ribosomal stalk which helps the ribosome interact with GTP-bound translation factors. Is thus essential for accurate translation. The protein is Large ribosomal subunit protein bL12 of Bifidobacterium animalis subsp. lactis (strain AD011).